A 109-amino-acid chain; its full sequence is Small ribosomal subunit protein uS10 (109 aa).

This sequence belongs to the universal ribosomal protein uS10 family. As to quaternary structure, part of the 30S ribosomal subunit.

In terms of biological role, involved in the binding of tRNA to the ribosomes. This is Small ribosomal subunit protein uS10 from Nanoarchaeum equitans (strain Kin4-M).